Reading from the N-terminus, the 507-residue chain is Transcription factor SOX-9 (507 aa).

Disordered regions lie at residues 1 to 67 and 160 to 250; these read MNLL…SEED and RLRV…AGKV. A compositionally biased stretch (low complexity) spans 30–41; the sequence is SAGSPCPSGSGS. A compositionally biased stretch (polar residues) spans 42-52; that stretch reads DTENTRPQENT. Composition is skewed to basic and acidic residues over residues 56-67 and 160-174; these read GEPDLKKESEED and RLRV…DYKY. The segment at 63–103 is dimerization (DIM); that stretch reads ESEEDKFPVCIREAVSQVLKGYDWTLVPMPVRVNGSSKNKP. A PQA region spans residues 63-103; it reads ESEEDKFPVCIREAVSQVLKGYDWTLVPMPVRVNGSSKNKP. At Ser-64 the chain carries Phosphoserine; by PKA. The HMG box DNA-binding region spans 105-173; sequence VKRPMNAFMV…QHKKDHPDYK (69 aa). Ser-211 bears the Phosphoserine; by PKA mark. Residues 224 to 307 are transactivation domain (TAM); that stretch reads PGEHSGQSQG…LPPNGHPGVP (84 aa). 2 consecutive short sequence motifs (9aaTAD) follow at residues 275–284 and 290–298; these read IGELSSDVIS and DVNEFDQYL. A disordered region spans residues 335-429; the sequence is WMSKQQAPPP…PFNLPHYSPS (95 aa). Pro residues predominate over residues 341-369; the sequence is APPPPPQQPPQAPQAPQAPPQQQAPPQQP. The segment covering 378 to 420 has biased composition (polar residues); the sequence is HTLTTLSSEPGQSQRTHIKTEQLSPSHYSEQQQHSPQQISYSP. A transactivation domain (TAC) region spans residues 392–507; it reads RTHIKTEQLS…QPVYTQLTRP (116 aa). A Glycyl lysine isopeptide (Lys-Gly) (interchain with G-Cter in ubiquitin) cross-link involves residue Lys-396. The 9aaTAD 3 motif lies at 458–466; the sequence is SGLYSTFTY. The disordered stretch occupies residues 477–507; sequence PIADTSGVPSIPQTHSPQHWEQPVYTQLTRP. The segment covering 483–507 has biased composition (polar residues); it reads GVPSIPQTHSPQHWEQPVYTQLTRP.

Homodimer; homodimerization is required for activity. Interacts (via C-terminus) with ZNF219; forming a complex that binds to the COL2A1 promoter and activates COL2A1 expression. Interacts with DDRGK1. Interacts with EP300/p300. Interacts with beta-catenin (CTNNB1); inhibiting CTNNB1 activity by competing with the binding sites of TCF/LEF within CTNNB1. Post-translationally, acetylated; acetylation impairs nuclear localization and ability to transactivate expression of target genes. Deacetylated by SIRT1. In terms of processing, phosphorylation at Ser-64 and Ser-211 by PKA increases transcriptional activity and may help delay chondrocyte maturation downstream of PTHLH/PTHrP signaling. Phosphorylation at either Ser-64 or Ser-211 is required for sumoylation, but phosphorylation is not dependent on sumoylation. Phosphorylated on tyrosine residues; tyrosine dephosphorylation by PTPN11/SHP2 blocks SOX9 phosphorylation by PKA and subsequent SUMOylation. Sumoylated; phosphorylation at either Ser-64 or Ser-211 is required for sumoylation. Sumoylation is induced by BMP signaling pathway. Post-translationally, ubiquitinated; ubiquitination leads to proteasomal degradation and is negatively regulated by DDRGK1. In terms of tissue distribution, expressed in the intestinal epithelium (at protein level). Expressed in progenitor cells in various organs, including chondroprogenitors, osteoprogenitors and preadipocytes, but is not expressed in most differentiated cell types such as osteoblasts and adipocytes, with the exception of chondrocytes. Highly expressed in developing chondrogenic tissues. Also expressed in some non-chondrogenic tissues such as notochord, otic vesicle and neural tube.

The protein resides in the nucleus. In terms of biological role, transcription factor that plays a key role in chondrocytes differentiation and skeletal development. Specifically binds the 5'-ACAAAG-3' DNA motif present in enhancers and super-enhancers and promotes expression of genes important for chondrogenesis, including cartilage matrix protein-coding genes COL2A1, COL4A2, COL9A1, COL11A2 and ACAN, SOX5 and SOX6. Also binds to some promoter regions. Plays a central role in successive steps of chondrocyte differentiation. Absolutely required for precartilaginous condensation, the first step in chondrogenesis during which skeletal progenitors differentiate into prechondrocytes. Together with SOX5 and SOX6, required for overt chondrogenesis when condensed prechondrocytes differentiate into early stage chondrocytes, the second step in chondrogenesis. Later, required to direct hypertrophic maturation and block osteoblast differentiation of growth plate chondrocytes: maintains chondrocyte columnar proliferation, delays prehypertrophy and then prevents osteoblastic differentiation of chondrocytes by lowering beta-catenin (CTNNB1) signaling and RUNX2 expression. Also required for chondrocyte hypertrophy, both indirectly, by keeping the lineage fate of chondrocytes, and directly, by remaining present in upper hypertrophic cells and transactivating COL10A1 along with MEF2C. Low lipid levels are the main nutritional determinant for chondrogenic commitment of skeletal progenitor cells: when lipids levels are low, FOXO (FOXO1 and FOXO3) transcription factors promote expression of SOX9, which induces chondrogenic commitment and suppresses fatty acid oxidation. Mechanistically, helps, but is not required, to remove epigenetic signatures of transcriptional repression and deposit active promoter and enhancer marks at chondrocyte-specific genes. Acts in cooperation with the Hedgehog pathway-dependent GLI (GLI1 and GLI3) transcription factors. In addition to cartilage development, also acts as a regulator of proliferation and differentiation in epithelial stem/progenitor cells: involved in the lung epithelium during branching morphogenesis, by balancing proliferation and differentiation and regulating the extracellular matrix. Controls epithelial branching during kidney development. In Mus musculus (Mouse), this protein is Transcription factor SOX-9.